The sequence spans 283 residues: NAD kinase (283 aa).

Aspartate 66 functions as the Proton acceptor in the catalytic mechanism. NAD(+) is bound by residues 66–67 (DG), 137–138 (ND), arginine 165, aspartate 167, and 178–183 (TGYSLS).

This sequence belongs to the NAD kinase family. The cofactor is a divalent metal cation.

Its subcellular location is the cytoplasm. The catalysed reaction is NAD(+) + ATP = ADP + NADP(+) + H(+). Involved in the regulation of the intracellular balance of NAD and NADP, and is a key enzyme in the biosynthesis of NADP. Catalyzes specifically the phosphorylation on 2'-hydroxyl of the adenosine moiety of NAD to yield NADP. The polypeptide is NAD kinase (Chloroherpeton thalassium (strain ATCC 35110 / GB-78)).